The primary structure comprises 655 residues: MGTRASSITALASCSRTAGQVGATMVAGSLLLLGFLSTITAQPEQKTLSLPGTYRHVDRTTGQVLTCDKCPAGTYVSEHCTNMSLRVCSSCPAGTFTRHENGIERCHDCSQPCPWPMIERLPCAALTDRECICPPGMYQSNGTCAPHTVCPVGWGVRKKGTENEDVRCKQCARGTFSDVPSSVMKCKAHTDCLGQNLEVVKPGTKETDNVCGMRLFFSSTNPPSSGTVTFSHPEHMESHDVPSSTYEPQGMNSTDSNSTASVRTKVPSGIEEGTVPDNTSSTSGKEGTNRTLPNPPQVTHQQAPHHRHILKLLPSSMEATGEKSSTAIKAPKRGHPRQNAHKHFDINEHLPWMIVLFLLLVLVLIVVCSIRKSSRTLKKGPRQDPSAIVEKAGLKKSLTPTQNREKWIYYRNGHGIDILKLVAAQVGSQWKDIYQFLCNASEREVAAFSNGYTADHERAYAALQHWTIRGPEASLAQLISALRQHRRNDVVEKIRGLMEDTTQLETDKLALPMSPSPLSPSPMPSPNVKLENSTLLTVEPSPLDKNKCFFVDESEPLLRCDSTSSGSSALSRNGSFITKEKKDTVLRQVRLDPCDLQPIFDDMLHILNPEELRVIEEIPQAEDKLDRLFEIIGVKSQEASQTLLDSVYSHLPDLL.

An N-terminal signal peptide occupies residues 1–41 (MGTRASSITALASCSRTAGQVGATMVAGSLLLLGFLSTITA). The Extracellular portion of the chain corresponds to 42–349 (QPEQKTLSLP…AHKHFDINEH (308 aa)). TNFR-Cys repeat units follow at residues 50–88 (LPGT…LRVC), 90–131 (SCPA…DREC), 133–167 (CPPG…EDVR), and 170–211 (QCAR…DNVC). Disulfide bonds link C67-C80, C70-C88, C91-C106, C109-C123, C113-C131, C133-C144, C150-C168, C171-C186, and C192-C211. Residue N82 is glycosylated (N-linked (GlcNAc...) asparagine). N141 carries N-linked (GlcNAc...) asparagine glycosylation. 2 disordered regions span residues 222-305 (PPSS…QAPH) and 318-339 (EATG…PRQN). 2 stretches are compositionally biased toward polar residues: residues 241–262 (VPSS…TASV) and 276–302 (PDNT…THQQ). N-linked (GlcNAc...) asparagine glycosylation is found at N252, N257, N278, and N289. The segment covering 330–339 (APKRGHPRQN) has biased composition (basic residues). A helical transmembrane segment spans residues 350–370 (LPWMIVLFLLLVLVLIVVCSI). C368 carries S-palmitoyl cysteine lipidation. The Cytoplasmic segment spans residues 371 to 655 (RKSSRTLKKG…SVYSHLPDLL (285 aa)). One can recognise a Death domain in the interval 415 to 498 (GIDILKLVAA…DVVEKIRGLM (84 aa)).

In terms of assembly, associates with TRADD. Interacts with NGFR. Interacts with CASP8. In terms of processing, oxidized in response to reactive oxygen species (ROS), leading to endocytosis. In terms of tissue distribution, detected in spleen B-cells (at protein level). Ubiquitous. Highly expressed in adult spleen, thymus, testis, prostate, ovary, small intestine, colon, brain, lung and kidney, and in fetal brain, liver and lung. Detected at lower levels in adult peripheral blood leukocytes, lung, and in fetal muscle, heart, kidney, small intestine and skin. Detected in T-cells, B-cells and monocytes. In T-cells expression is highest in Th0 cells, intermediate in Th2 cells and lower in Th1 cells. Expressed at low levels in proliferating progenitors in the spinal cord, but is highly expressed by differentiating neurons within the spinal cord and adjacent dorsal root ganglia.

It localises to the cell membrane. Its function is as follows. Promotes apoptosis, possibly via a pathway that involves the activation of NF-kappa-B. Can also promote apoptosis mediated by BAX and by the release of cytochrome c from the mitochondria into the cytoplasm. Trophic-factor deprivation triggers the cleavage of surface APP by beta-secretase to release sAPP-beta which is further cleaved to release an N-terminal fragment of APP (N-APP). Negatively regulates oligodendrocyte survival, maturation and myelination. Plays a role in signaling cascades triggered by stimulation of T-cell receptors, in the adaptive immune response and in the regulation of T-cell differentiation and proliferation. Negatively regulates T-cell responses and the release of cytokines such as IL4, IL5, IL10, IL13 and IFNG by Th2 cells. Negatively regulates the production of IgG, IgM and IgM in response to antigens. May inhibit the activation of JNK in response to T-cell stimulation. Also acts as a regulator of pyroptosis: recruits CASP8 in response to reactive oxygen species (ROS) and subsequent oxidation, leading to activation of GSDMC. This Mus musculus (Mouse) protein is Tumor necrosis factor receptor superfamily member 21 (Tnfrsf21).